The chain runs to 117 residues: Large ribosomal subunit protein bL20c (117 aa).

The protein belongs to the bacterial ribosomal protein bL20 family.

It localises to the plastid. It is found in the chloroplast. Binds directly to 23S ribosomal RNA and is necessary for the in vitro assembly process of the 50S ribosomal subunit. It is not involved in the protein synthesizing functions of that subunit. The sequence is that of Large ribosomal subunit protein bL20c from Populus trichocarpa (Western balsam poplar).